The sequence spans 430 residues: Protein arginine methyltransferase NDUFAF7, mitochondrial (430 aa).

The transit peptide at 1–31 (MSGLARLRKTAFLMVSASANCRIQRYQSSRT) directs the protein to the mitochondrion.

This sequence belongs to the NDUFAF7 family.

It localises to the mitochondrion. It carries out the reaction L-arginyl-[protein] + 2 S-adenosyl-L-methionine = N(omega),N(omega)'-dimethyl-L-arginyl-[protein] + 2 S-adenosyl-L-homocysteine + 2 H(+). Its function is as follows. Arginine methyltransferase involved in the assembly or stability of mitochondrial NADH:ubiquinone oxidoreductase complex (complex I). Acts by mediating symmetric dimethylation of 'Arg-118' of ndufs2 after it assembles into the complex I, stabilizing the early intermediate complex. The chain is Protein arginine methyltransferase NDUFAF7, mitochondrial from Xenopus tropicalis (Western clawed frog).